A 117-amino-acid polypeptide reads, in one-letter code: Large ribosomal subunit protein bL19 (117 aa).

It belongs to the bacterial ribosomal protein bL19 family.

Functionally, this protein is located at the 30S-50S ribosomal subunit interface and may play a role in the structure and function of the aminoacyl-tRNA binding site. This is Large ribosomal subunit protein bL19 from Halorhodospira halophila (strain DSM 244 / SL1) (Ectothiorhodospira halophila (strain DSM 244 / SL1)).